A 256-amino-acid polypeptide reads, in one-letter code: Isoprenyl transferase (256 aa).

The segment at M1–L22 is disordered. The active site involves D36. D36 is a binding site for Mg(2+). Substrate-binding positions include G37–R40, W41, R49, H53, and S81–E83. The active-site Proton acceptor is the N84. Substrate is bound by residues W85, R87, R204, and R210–S212. E223 is a binding site for Mg(2+).

The protein belongs to the UPP synthase family. In terms of assembly, homodimer. It depends on Mg(2+) as a cofactor.

In terms of biological role, catalyzes the condensation of isopentenyl diphosphate (IPP) with allylic pyrophosphates generating different type of terpenoids. The protein is Isoprenyl transferase of Halalkalibacterium halodurans (strain ATCC BAA-125 / DSM 18197 / FERM 7344 / JCM 9153 / C-125) (Bacillus halodurans).